We begin with the raw amino-acid sequence, 239 residues long: Purine nucleoside phosphorylase DeoD-type (239 aa).

H5 lines the a purine D-ribonucleoside pocket. Residues G21, R25, R44, and R88–S91 each bind phosphate. Residues E180 to E182 and S204 to D205 contribute to the a purine D-ribonucleoside site. D205 functions as the Proton donor in the catalytic mechanism.

It belongs to the PNP/UDP phosphorylase family. Homohexamer; trimer of homodimers.

The catalysed reaction is a purine D-ribonucleoside + phosphate = a purine nucleobase + alpha-D-ribose 1-phosphate. It carries out the reaction a purine 2'-deoxy-D-ribonucleoside + phosphate = a purine nucleobase + 2-deoxy-alpha-D-ribose 1-phosphate. In terms of biological role, catalyzes the reversible phosphorolytic breakdown of the N-glycosidic bond in the beta-(deoxy)ribonucleoside molecules, with the formation of the corresponding free purine bases and pentose-1-phosphate. This chain is Purine nucleoside phosphorylase DeoD-type, found in Salmonella arizonae (strain ATCC BAA-731 / CDC346-86 / RSK2980).